A 299-amino-acid polypeptide reads, in one-letter code: HTH-type transcriptional regulator CynR (299 aa).

Positions 1–58 (MLSRHINYFLAVAEHGSFTRAASALHVSQPALSQQIRQLEESLGVPLFDRSGRTIRLT) constitute an HTH lysR-type domain. Positions 18-37 (FTRAASALHVSQPALSQQIR) form a DNA-binding region, H-T-H motif.

The protein belongs to the LysR transcriptional regulatory family.

Its subcellular location is the cytoplasm. Functionally, positively regulates the cynTSX operon, and negatively regulates its own transcription. Binds specifically to the cynR-cynTSX intergenic region. The protein is HTH-type transcriptional regulator CynR (cynR) of Escherichia coli (strain K12).